The sequence spans 216 residues: Thiopurine S-methyltransferase (216 aa).

4 residues coordinate S-adenosyl-L-methionine: Trp-11, Leu-46, Glu-67, and Arg-122.

Belongs to the class I-like SAM-binding methyltransferase superfamily. TPMT family.

The protein localises to the cytoplasm. The catalysed reaction is S-adenosyl-L-methionine + a thiopurine = S-adenosyl-L-homocysteine + a thiopurine S-methylether.. This Vibrio campbellii (strain ATCC BAA-1116) protein is Thiopurine S-methyltransferase.